The primary structure comprises 284 residues: 3-methyl-2-oxobutanoate hydroxymethyltransferase 2 (284 aa).

Mg(2+) is bound by residues aspartate 49 and aspartate 88. 3-methyl-2-oxobutanoate is bound by residues 49-50 (DS), aspartate 88, and lysine 118. Glutamate 120 serves as a coordination point for Mg(2+). The active-site Proton acceptor is the glutamate 187.

It belongs to the PanB family. In terms of assembly, homodecamer; pentamer of dimers. Requires Mg(2+) as cofactor.

Its subcellular location is the cytoplasm. The catalysed reaction is 3-methyl-2-oxobutanoate + (6R)-5,10-methylene-5,6,7,8-tetrahydrofolate + H2O = 2-dehydropantoate + (6S)-5,6,7,8-tetrahydrofolate. It participates in cofactor biosynthesis; (R)-pantothenate biosynthesis; (R)-pantoate from 3-methyl-2-oxobutanoate: step 1/2. Functionally, catalyzes the reversible reaction in which hydroxymethyl group from 5,10-methylenetetrahydrofolate is transferred onto alpha-ketoisovalerate to form ketopantoate. This chain is 3-methyl-2-oxobutanoate hydroxymethyltransferase 2, found in Burkholderia cenocepacia (strain HI2424).